A 331-amino-acid polypeptide reads, in one-letter code: tRNA (guanine-N(1)-)-methyltransferase (331 aa).

Low complexity-rich tracts occupy residues 77 to 99 and 107 to 134; these read GSDT…QATR and AQPG…GRAA. The tract at residues 77–137 is disordered; it reads GSDTTARSGS…PGAGRAASSR (61 aa). Residues Gly-169 and 193 to 198 contribute to the S-adenosyl-L-methionine site; that span reads LGDYVL. The disordered stretch occupies residues 312 to 331; that stretch reads WQRCSPAPSEQAPEGARDMA.

This sequence belongs to the RNA methyltransferase TrmD family. In terms of assembly, homodimer.

It is found in the cytoplasm. It carries out the reaction guanosine(37) in tRNA + S-adenosyl-L-methionine = N(1)-methylguanosine(37) in tRNA + S-adenosyl-L-homocysteine + H(+). Specifically methylates guanosine-37 in various tRNAs. The polypeptide is tRNA (guanine-N(1)-)-methyltransferase (Kocuria rhizophila (strain ATCC 9341 / DSM 348 / NBRC 103217 / DC2201)).